Consider the following 502-residue polypeptide: Maturase K (502 aa).

It belongs to the intron maturase 2 family. MatK subfamily.

The protein resides in the plastid. Its subcellular location is the chloroplast. Usually encoded in the trnK tRNA gene intron. Probably assists in splicing its own and other chloroplast group II introns. The protein is Maturase K of Ehretia anacua (Sandpaper tree).